The following is a 340-amino-acid chain: MVKMYYEADVKQEVLRGKTIAIIGYGSQGHAQAQNLRDSGYKVVVGLRPGKSWDVAAKDGFEVLTVAEATKRADVVQILMPDERQAQVYRDEIAPNLKSGAALCFSHGFNIHYAQIVPPADVDVIMAAPKSPGHLVRRVYQEGFGVPGLIAIYQDATGNAKDLALAYSSGIGCTKAGVIETSFREETETDLFGEQAVLCGGASELVKAGFDTLVEAGYAPEIAYFECLHELKLIVDLMYEGGLARMRYSISDTAEYGDYSTGRRIITDETRKEMKKVLAEIQDGTFARNWILENQANRPGFTSRRRLESEHGIEVVGEQLRGMMSWINKDTKKEEVKIGQ.

The KARI N-terminal Rossmann domain maps to 2 to 181; sequence VKMYYEADVK…GCTKAGVIET (180 aa). Residues 25–28, arginine 48, serine 52, and 82–85 contribute to the NADP(+) site; these read YGSQ and DERQ. Residue histidine 107 is part of the active site. Glycine 133 lines the NADP(+) pocket. Positions 182–327 constitute a KARI C-terminal knotted domain; that stretch reads SFREETETDL…EQLRGMMSWI (146 aa). Residues aspartate 190, glutamate 194, glutamate 226, and glutamate 230 each contribute to the Mg(2+) site. Serine 251 contributes to the substrate binding site.

Belongs to the ketol-acid reductoisomerase family. The cofactor is Mg(2+).

The catalysed reaction is (2R)-2,3-dihydroxy-3-methylbutanoate + NADP(+) = (2S)-2-acetolactate + NADPH + H(+). It carries out the reaction (2R,3R)-2,3-dihydroxy-3-methylpentanoate + NADP(+) = (S)-2-ethyl-2-hydroxy-3-oxobutanoate + NADPH + H(+). Its pathway is amino-acid biosynthesis; L-isoleucine biosynthesis; L-isoleucine from 2-oxobutanoate: step 2/4. It functions in the pathway amino-acid biosynthesis; L-valine biosynthesis; L-valine from pyruvate: step 2/4. Its function is as follows. Involved in the biosynthesis of branched-chain amino acids (BCAA). Catalyzes an alkyl-migration followed by a ketol-acid reduction of (S)-2-acetolactate (S2AL) to yield (R)-2,3-dihydroxy-isovalerate. In the isomerase reaction, S2AL is rearranged via a Mg-dependent methyl migration to produce 3-hydroxy-3-methyl-2-ketobutyrate (HMKB). In the reductase reaction, this 2-ketoacid undergoes a metal-dependent reduction by NADPH to yield (R)-2,3-dihydroxy-isovalerate. This chain is Ketol-acid reductoisomerase (NADP(+)), found in Brevibacillus brevis (strain 47 / JCM 6285 / NBRC 100599).